Consider the following 265-residue polypeptide: Probable esterase tazC (265 aa).

Active-site charge relay system residues include Ser119, Asp209, and His236.

This sequence belongs to the LovG family.

The protein operates within secondary metabolite biosynthesis. Functionally, probable esterase; part of the gene cluster that mediates the biosynthesis of azaterrilone A and other azaphilones, a class of fungal metabolites characterized by a highly oxygenated pyrano-quinone bicyclic core and exhibiting a broad range of bioactivities. The first step of the pathway begins with the non-reducing polyketide synthase tazA that assembles one acetyl-CoA starter unit, five malonyl-CoA units, and catalyzes a series of Claisen condensations, methylation, PT-mediated cyclization, and finally releases the first hexaketide precursor through the R-domain. The tazA product then undergoes reduction on its terminal ketone and the following pyran-ring formation by yet undetermined enzyme(s). Dehydration and enoyl reduction, possibly involving the trans-enoyl reductase tazE leads to the next intermediate. TazD is predicted as an acetyltransferase and might catalyze the acetylation steps leading to the synthesis of azaterrilone A. Azaterrilone A is not the final product of the taz pathway and both the highly reducing polyketide synthase tazB and the dual enzyme tazHJ catalyze late steps of the pathway, leading to the production of the 2 final stereoisomers that contain additional polyketide modification whose structures have still to be determined. The polypeptide is Probable esterase tazC (Aspergillus terreus (strain NIH 2624 / FGSC A1156)).